The primary structure comprises 306 residues: Mitochondrial brown fat uncoupling protein 1 (306 aa).

Residues 1–10 are Mitochondrial intermembrane-facing; sequence MVGTTTTDVP. Residues 11-32 form a helical membrane-spanning segment; sequence PTMGVKIFSAGVAACLADVITF. Solcar repeat units follow at residues 11 to 102, 110 to 200, and 209 to 294; these read PTMG…VQEF, PSLG…MKGA, and DDVP…LKGE. The Mitochondrial matrix segment spans residues 33-73; it reads PLDTAKVRQQIQGEFPITSGIRYKGVLGTITTLAKTEGPLK. Lysine 56 is a binding site for fatty acid 16:0. The chain crosses the membrane as a helical span at residues 74–96; sequence LYSGLPAGLQRQISFASLRIGLY. At 97-115 the chain is on the mitochondrial intermembrane side; it reads DTVQEFFTSGEETPSLGSK. A helical membrane pass occupies residues 116-132; it reads ISAGLTTGGVAVFIGQP. Residues 133 to 177 are Mitochondrial matrix-facing; it reads TEVVKVRLQAQSHLHGLKPRYTGTYNAYRIIATTESLTSLWKGTT. Residues 178–194 form a helical membrane-spanning segment; sequence PNLLRNVIINCTELVTY. Over 195–211 the chain is Mitochondrial intermembrane; it reads DLMKGALVRNEILADDV. The helical transmembrane segment at 212–231 threads the bilayer; sequence PCHFVSALIAGFCTTLLSSP. The Mitochondrial matrix segment spans residues 232-265; that stretch reads VDVVKTRFINSPPGQYASVPNCAMTMFTKEGPTA. Cysteine 253 is subject to Cysteine sulfenic acid (-SOH). The chain crosses the membrane as a helical span at residues 266–288; that stretch reads FFKGFVPSFLRLGSWNVIMFVCF. Lysine 268 contributes to the fatty acid 16:0 binding site. Residues 289–306 are Mitochondrial intermembrane-facing; sequence EKLKGELMRSRQTVDCAT.

It belongs to the mitochondrial carrier (TC 2.A.29) family. As to quaternary structure, most probably functions as a monomer. Binds one purine nucleotide per monomer. However, has also been suggested to function as a homodimer or a homotetramer. Tightly associates with cardiolipin in the mitochondrion inner membrane; may stabilize and regulate its activity. Post-translationally, may undergo sulfenylation upon cold exposure. May increase the sensitivity of UCP1 thermogenic function to the activation by noradrenaline probably through structural effects. In terms of processing, may undergo ubiquitin-mediated proteasomal degradation. As to expression, brown adipose tissue.

The protein resides in the mitochondrion inner membrane. It catalyses the reaction H(+)(in) = H(+)(out). Has no constitutive proton transporter activity and has to be activated by long-chain fatty acids/LCFAs. Inhibited by purine nucleotides. Both purine nucleotides and LCFAs bind the cytosolic side of the transporter and directly compete to activate or inhibit it. Activated by noradrenaline and reactive oxygen species. Despite lacking canonical translational encoding for selenocysteine, a small pool of the protein has been observed to selectively incorporate selenocysteine at 'Cys-253'. Selenocysteine-modified protein is highly sensitive to redox modification and may constitute a pool of protein highly sensitive to activation by elevated levels of reactive oxygen species (ROS). Functionally, mitochondrial protein responsible for thermogenic respiration, a specialized capacity of brown adipose tissue and beige fat that participates in non-shivering adaptive thermogenesis to temperature and diet variations and more generally to the regulation of energy balance. Functions as a long-chain fatty acid/LCFA and proton symporter, simultaneously transporting one LCFA and one proton through the inner mitochondrial membrane. However, LCFAs remaining associated with the transporter via their hydrophobic tails, it results in an apparent transport of protons activated by LCFAs. Thereby, dissipates the mitochondrial proton gradient and converts the energy of substrate oxydation into heat instead of ATP. Regulates the production of reactive oxygen species/ROS by mitochondria. This chain is Mitochondrial brown fat uncoupling protein 1, found in Oryctolagus cuniculus (Rabbit).